Here is a 709-residue protein sequence, read N- to C-terminus: Kelch-like protein 11 (709 aa).

An N-terminal signal peptide occupies residues 1–15; it reads MAAAVAAAAAAAAAA. In terms of domain architecture, BTB spans 95 to 171; sequence CDITLCFGGA…MYTGRIRVST (77 aa). In terms of domain architecture, BACK spans 206 to 308; sequence CVAIHSLAHM…KPTYLTRHVK (103 aa). Kelch repeat units follow at residues 361 to 408, 409 to 454, 456 to 502, 504 to 557, and 611 to 662; these read VIMV…ITES, YVYV…EVKG, LYSI…AIED, FVYI…VVNS, and DVFI…HVRI. At serine 466 the chain carries Phosphoserine.

As to quaternary structure, homodimer. Interacts with CUL3. Component of a cullin-RING-based BCR (BTB-CUL3-RBX1) E3 ubiquitin-protein ligase complex.

In terms of biological role, component of a cullin-RING-based BCR (BTB-CUL3-RBX1) E3 ubiquitin-protein ligase complex that mediates the ubiquitination of target proteins, leading most often to their proteasomal degradation. The sequence is that of Kelch-like protein 11 (Klhl11) from Mus musculus (Mouse).